Consider the following 540-residue polypeptide: Chaperonin GroEL (540 aa).

ATP-binding positions include 29 to 32 (TIGP), 86 to 90 (DGTTT), G413, 476 to 478 (NAA), and D492. A disordered region spans residues 520–540 (DKPEPESNNQMPATPGMGGMM).

Belongs to the chaperonin (HSP60) family. In terms of assembly, forms a cylinder of 14 subunits composed of two heptameric rings stacked back-to-back. Interacts with the co-chaperonin GroES.

Its subcellular location is the cytoplasm. It catalyses the reaction ATP + H2O + a folded polypeptide = ADP + phosphate + an unfolded polypeptide.. In terms of biological role, together with its co-chaperonin GroES, plays an essential role in assisting protein folding. The GroEL-GroES system forms a nano-cage that allows encapsulation of the non-native substrate proteins and provides a physical environment optimized to promote and accelerate protein folding. The protein is Chaperonin GroEL of Ligilactobacillus salivarius (strain UCC118) (Lactobacillus salivarius).